The primary structure comprises 188 residues: dCTP deaminase (188 aa).

DCTP contacts are provided by residues 111 to 116 (KSTYAR), 135 to 137 (TLE), glutamine 156, tyrosine 170, and glutamine 180. The Proton donor/acceptor role is filled by glutamate 137.

Belongs to the dCTP deaminase family. As to quaternary structure, homotrimer.

It catalyses the reaction dCTP + H2O + H(+) = dUTP + NH4(+). The protein operates within pyrimidine metabolism; dUMP biosynthesis; dUMP from dCTP (dUTP route): step 1/2. In terms of biological role, catalyzes the deamination of dCTP to dUTP. The polypeptide is dCTP deaminase (Coxiella burnetii (strain CbuK_Q154) (Coxiella burnetii (strain Q154))).